We begin with the raw amino-acid sequence, 626 residues long: Chaperone protein HtpG (626 aa).

Residues 1–339 (MSTNQETRGF…SNDLPLNVSR (339 aa)) are a; substrate-binding. A b region spans residues 340–555 (EILQDNKVTA…NDQMTTQMAK (216 aa)). The segment at 556-626 (LFAAAGQPVP…FIKRVNNLLG (71 aa)) is c.

This sequence belongs to the heat shock protein 90 family. As to quaternary structure, homodimer.

The protein resides in the cytoplasm. Functionally, molecular chaperone. Has ATPase activity. This Histophilus somni (strain 2336) (Haemophilus somnus) protein is Chaperone protein HtpG.